The primary structure comprises 846 residues: MELEPTLFGIIEALAPQLLSQSHLQTFVSDVVNLLRSSTKSATQLGPLIDFYKLQSLDSPETTIMWHKIEKFLDALFGIQNTDDMVKYLSVFQSLLPSNYRAKIVQKSSGLNMENLANHEHLLSPVRAPSIYTEASFENMDRFSERRSMVSSPNRYVPSSTYSSVTLRQLSNPYYVNTIPEEDILKYVSYTLLATTSALFPFDHEQIQIPSKIPNFESGLLHLIFEAGLLYQSLGYKVEKFRMLNISPMKKALIIEISEELQNYTAFVNNLVSSGTVVSLKSLYREIYENIIRLRIYCRFTEHLEELSGDTFLIELNIFKSHGDLTIRKIATNLFNSMISLYYEYLMNWLTKGLLRATYGEFFIAENTDTNGTDDDFIYHIPIEFNQERVPAFIPKELAYKIFMIGKSYIFLEKYCKEVQWTNEFSKKYHVLYQSNSYRGISTNFFEIINDQYSEIVNHTNQILNQKFHYRDVVFALKNILLMGKSDFMDALIEKANDILATPSDSLPNYKLTRVLQEAVQLSSLRHLMNSPRNSSVINGLDARVLDLGHGSVGWDVFTLDYILYPPLSLVLNVNRPFGRKEYLRIFNFLWRFKKNNYFYQKEMLKSNDIIRSFKKIRGYNPLIRDIINKLSRISILRTQFQQFNSKMESYYLNCIIEENFKEMTRKLQRTENKSQNQFDLIRLNNGTIELNGILTPKAEVLTKSSSSKPQKHAIEKTLNIDELESVHNTFLTNILSHKLFATNTSEISVGDYSGQPYPTSLVLLLNSVYEFVKVYCNLNDIGYEIFIKMNLNDHEASNGLLGKFNTNLKEIVSQYKNFKDRLYIFRADLKNDGDEELFLLSKSLR.

S124 and S136 each carry phosphoserine.

The protein belongs to the TUBGCP family. As to quaternary structure, interacts with TUB4, SPC72 and SPC97.

Its subcellular location is the nucleus. The protein localises to the cytoplasm. It localises to the cytoskeleton. The protein resides in the microtubule organizing center. It is found in the spindle pole body. Involved in microtubule organization by the microtubule organizing center, the spindle pole body (SPB). Probably part of the microtubule attachment site at the SPB. The sequence is that of Spindle pole body component SPC98 (SPC98) from Saccharomyces cerevisiae (strain ATCC 204508 / S288c) (Baker's yeast).